Reading from the N-terminus, the 568-residue chain is Urease subunit alpha (568 aa).

The Urease domain maps to 132-568; the sequence is GAIDTHVHYI…LPLAQLYNLF (437 aa). 3 residues coordinate Ni(2+): histidine 137, histidine 139, and lysine 219. An N6-carboxylysine modification is found at lysine 219. Residue histidine 221 participates in substrate binding. The Ni(2+) site is built by histidine 248 and histidine 274. Histidine 322 (proton donor) is an active-site residue. Position 362 (aspartate 362) interacts with Ni(2+).

It belongs to the metallo-dependent hydrolases superfamily. Urease alpha subunit family. Heterotrimer of UreA (gamma), UreB (beta) and UreC (alpha) subunits. Three heterotrimers associate to form the active enzyme. The cofactor is Ni cation. Carboxylation allows a single lysine to coordinate two nickel ions.

Its subcellular location is the cytoplasm. It catalyses the reaction urea + 2 H2O + H(+) = hydrogencarbonate + 2 NH4(+). It participates in nitrogen metabolism; urea degradation; CO(2) and NH(3) from urea (urease route): step 1/1. In Azobacteroides pseudotrichonymphae genomovar. CFP2, this protein is Urease subunit alpha.